A 328-amino-acid polypeptide reads, in one-letter code: uncharacterized protein (328 aa).

A disordered region spans residues 1-22; that stretch reads MPVKPNQPRPSTKQDPSSGASR. A compositionally biased stretch (polar residues) spans 9–21; the sequence is RPSTKQDPSSGAS. Transmembrane regions (helical) follow at residues 66–86, 126–146, 176–196, 221–241, 255–275, and 290–310; these read FSFLSLIPILMVSFATAGFVL, TVGLTGLLIALYSGVNWIGNL, FLSLIGLLLALVITLFLTSVA, LIALSISIFANYLLFLWILWV, GTLMAAIGFEALKFAMTVALP, and IGLMTFFYFFARLTLFCAAWI.

The protein to E.coli YhjD.

It is found in the cell inner membrane. This is an uncharacterized protein from Dickeya dadantii (strain 3937) (Erwinia chrysanthemi (strain 3937)).